The sequence spans 422 residues: Serine--tRNA ligase (422 aa).

231–233 serves as a coordination point for L-serine; that stretch reads TSE. Residue 262–264 participates in ATP binding; it reads RQE. L-serine is bound at residue Glu285. ATP is bound at residue 349–352; it reads EISS. Ser384 provides a ligand contact to L-serine.

This sequence belongs to the class-II aminoacyl-tRNA synthetase family. Type-1 seryl-tRNA synthetase subfamily. As to quaternary structure, homodimer. The tRNA molecule binds across the dimer.

The protein localises to the cytoplasm. The catalysed reaction is tRNA(Ser) + L-serine + ATP = L-seryl-tRNA(Ser) + AMP + diphosphate + H(+). The enzyme catalyses tRNA(Sec) + L-serine + ATP = L-seryl-tRNA(Sec) + AMP + diphosphate + H(+). It participates in aminoacyl-tRNA biosynthesis; selenocysteinyl-tRNA(Sec) biosynthesis; L-seryl-tRNA(Sec) from L-serine and tRNA(Sec): step 1/1. Catalyzes the attachment of serine to tRNA(Ser). Is also able to aminoacylate tRNA(Sec) with serine, to form the misacylated tRNA L-seryl-tRNA(Sec), which will be further converted into selenocysteinyl-tRNA(Sec). The protein is Serine--tRNA ligase of Mycoplasma mycoides subsp. mycoides SC (strain CCUG 32753 / NCTC 10114 / PG1).